The primary structure comprises 215 residues: LexA repressor (215 aa).

Residues 28-48 (RAEIAAELGFSSPNAAEEHLR) constitute a DNA-binding region (H-T-H motif). Active-site for autocatalytic cleavage activity residues include S133 and K170.

Belongs to the peptidase S24 family. In terms of assembly, homodimer.

It carries out the reaction Hydrolysis of Ala-|-Gly bond in repressor LexA.. Functionally, represses a number of genes involved in the response to DNA damage (SOS response), including recA and lexA. In the presence of single-stranded DNA, RecA interacts with LexA causing an autocatalytic cleavage which disrupts the DNA-binding part of LexA, leading to derepression of the SOS regulon and eventually DNA repair. This Burkholderia ambifaria (strain ATCC BAA-244 / DSM 16087 / CCUG 44356 / LMG 19182 / AMMD) (Burkholderia cepacia (strain AMMD)) protein is LexA repressor.